The following is a 349-amino-acid chain: Dipeptide transport ATP-binding protein DppD (349 aa).

The region spanning 7 to 258 (LEVKNLHVNF…PQHPYTWGLL (252 aa)) is the ABC transporter domain. 43 to 50 (GESGSGKS) contacts ATP.

Belongs to the ABC transporter superfamily. The complex is composed of two ATP-binding proteins (DppD and DppF), two transmembrane proteins (DppB and DppC) and a solute-binding protein (DppA).

Its subcellular location is the cell membrane. The enzyme catalyses a dipeptide(out) + ATP + H2O = a dipeptide(in) + ADP + phosphate + H(+). Its function is as follows. Part of the ABC transporter DppABCDF involved in dipeptide transport. Responsible for energy coupling to the transport system. In Lactococcus lactis subsp. cremoris (strain MG1363), this protein is Dipeptide transport ATP-binding protein DppD.